Here is a 484-residue protein sequence, read N- to C-terminus: uncharacterized protein (484 aa).

The 180-residue stretch at 47-226 folds into the FAD-binding PCMH-type domain; the sequence is TLPIPAAVVK…TEVTVKIFKF (180 aa).

It belongs to the FAD-binding oxidoreductase/transferase type 4 family.

This is an uncharacterized protein from Escherichia coli O157:H7.